The chain runs to 110 residues: Ribonuclease P protein component 4 (110 aa).

Residues Cys65, Cys68, Cys94, and Cys97 each contribute to the Zn(2+) site.

The protein belongs to the eukaryotic/archaeal RNase P protein component 4 family. As to quaternary structure, consists of a catalytic RNA component and at least 5 protein subunits. It depends on Zn(2+) as a cofactor.

The protein resides in the cytoplasm. It catalyses the reaction Endonucleolytic cleavage of RNA, removing 5'-extranucleotides from tRNA precursor.. In terms of biological role, part of ribonuclease P, a protein complex that generates mature tRNA molecules by cleaving their 5'-ends. The polypeptide is Ribonuclease P protein component 4 (Methanococcus maripaludis (strain DSM 14266 / JCM 13030 / NBRC 101832 / S2 / LL)).